A 748-amino-acid polypeptide reads, in one-letter code: Rho GTPase-activating protein 24 (748 aa).

The PH domain maps to 18 to 124 (NATKCGWLRK…WVKSIRRVIW (107 aa)). One can recognise a Rho-GAP domain in the interval 134-328 (QKLEDTVRYE…VMISKHDRLF (195 aa)). The segment at 328–476 (FPKDTEPQSK…SSGTKMGTHS (149 aa)) is disordered. Composition is skewed to polar residues over residues 335–347 (QSKP…SNNN) and 356–368 (GQLQ…NTKE). Phosphoserine is present on residues S369, S391, S396, S398, S402, S413, S415, and S437. Basic and acidic residues predominate over residues 369–381 (SPVRRCSWDKPES). Residues 382-405 (PQRSSMDNGSPTALSGSKTNSPRN) are compositionally biased toward polar residues. Over residues 432-476 (IVTNGSFSSSNAEGVEKTQTTPNGSLQARRTSSLKSSGTKMGTHS) the composition is skewed to polar residues. Position 452 is a phosphothreonine (T452). S495 carries the phosphoserine modification. Positions 582 to 640 (DFYGGNFEDPVLDGPPQDDLSHPGDYENKSDRRSVGGRSSRATSSSDNSETFVGNTSSN) are disordered. A compositionally biased stretch (basic and acidic residues) spans 600 to 615 (DLSHPGDYENKSDRRS). Residues 617-630 (GGRSSRATSSSDNS) show a composition bias toward low complexity. A compositionally biased stretch (polar residues) spans 631–640 (ETFVGNTSSN). A coiled-coil region spans residues 649–729 (SSLKQEMTKQ…KEMEQFFSTF (81 aa)).

Interacts with FLNA. Phosphorylated by ROCK, leading to activate the RacGAP activity.

It localises to the cytoplasm. The protein resides in the cytoskeleton. It is found in the cell junction. The protein localises to the adherens junction. Its subcellular location is the focal adhesion. It localises to the cell projection. Rho GTPase-activating protein involved in cell polarity, cell morphology and cytoskeletal organization. Acts as a GTPase activator for the Rac-type GTPase by converting it to an inactive GDP-bound state. Controls actin remodeling by inactivating Rac downstream of Rho leading to suppress leading edge protrusion and promotes cell retraction to achieve cellular polarity. Able to suppress RAC1 and CDC42 activity in vitro. Overexpression induces cell rounding with partial or complete disruption of actin stress fibers and formation of membrane ruffles, lamellipodia, and filopodia. Isoform 2 is a vascular cell-specific GAP involved in modulation of angiogenesis. In Rattus norvegicus (Rat), this protein is Rho GTPase-activating protein 24 (Arhgap24).